The primary structure comprises 265 residues: MMTTPIYVVDAFTNQAFKGNPAAVCVLPTSRDDIWMQHVASEMNLSETAFLHPYQDGYSLRWFTPNTEVDLCGHATLASAHILWELDHISAEQPITFYTKSGILTASKRGEWIELDFPSEQPKQENVYPNELIDGLGIQPLYVGRNRFDYLIEIDSEQRLKELNPNFSLLEQIDTRGIIVTSKSTSTEYDFISRCFFPAVGVNEDPVTGSAHCCLGPYWQEKLNKNEFLAYQASKRGGMLKIKLQHDRVFLLGQAVTVLRSELLL.

Residue glutamate 47 is part of the active site.

Belongs to the PhzF family.

This is an uncharacterized protein from Halalkalibacterium halodurans (strain ATCC BAA-125 / DSM 18197 / FERM 7344 / JCM 9153 / C-125) (Bacillus halodurans).